The sequence spans 596 residues: uncharacterized protein (596 aa).

Positions 1–31 (MSTSNDPVVSSHDPIKQEKEQETDLEAQVEH) are disordered. The Cytoplasmic portion of the chain corresponds to 1 to 37 (MSTSNDPVVSSHDPIKQEKEQETDLEAQVEHKKRNER). Residues 13–22 (DPIKQEKEQE) show a composition bias toward basic and acidic residues. Residues 38–58 (GNAFVGFLILIFVYYLLRGGS) form a helical membrane-spanning segment. Residues 59–596 (NDNDKQEMSH…ILVSDSGEEA (538 aa)) are Lumenal-facing. N-linked (GlcNAc...) asparagine glycosylation is present at N118. H197 provides a ligand contact to Zn(2+). D199 is a catalytic residue. D232 serves as a coordination point for Zn(2+). E266 serves as the catalytic Proton acceptor. Zn(2+) is bound by residues E267 and D295. 3 N-linked (GlcNAc...) asparagine glycosylation sites follow: N466, N541, and N555. H565 contributes to the Zn(2+) binding site.

Belongs to the peptidase M20A family. Zn(2+) is required as a cofactor.

Its subcellular location is the vacuole membrane. This is an uncharacterized protein from Schizosaccharomyces pombe (strain 972 / ATCC 24843) (Fission yeast).